Here is a 211-residue protein sequence, read N- to C-terminus: tRNA (guanosine(18)-2'-O)-methyltransferase (211 aa).

Residues Thr-103, Ile-146, and Leu-155 each contribute to the S-adenosyl-L-methionine site.

This sequence belongs to the class IV-like SAM-binding methyltransferase superfamily. RNA methyltransferase TrmH family. In terms of assembly, homodimer.

The enzyme catalyses guanosine(18) in tRNA + S-adenosyl-L-methionine = 2'-O-methylguanosine(18) in tRNA + S-adenosyl-L-homocysteine + H(+). Functionally, catalyzes the 2'-O methylation of guanosine at position 18 in tRNA. Type II methylase, which methylates only a subset of tRNA species. The polypeptide is tRNA (guanosine(18)-2'-O)-methyltransferase (Aquifex aeolicus (strain VF5)).